Here is a 176-residue protein sequence, read N- to C-terminus: N5-carboxyaminoimidazole ribonucleotide mutase (176 aa).

Residues Ser-14, Asp-17, and Arg-44 each contribute to the substrate site.

It belongs to the AIR carboxylase family. Class I subfamily.

It catalyses the reaction 5-carboxyamino-1-(5-phospho-D-ribosyl)imidazole + H(+) = 5-amino-1-(5-phospho-D-ribosyl)imidazole-4-carboxylate. Its pathway is purine metabolism; IMP biosynthesis via de novo pathway; 5-amino-1-(5-phospho-D-ribosyl)imidazole-4-carboxylate from 5-amino-1-(5-phospho-D-ribosyl)imidazole (N5-CAIR route): step 2/2. Catalyzes the conversion of N5-carboxyaminoimidazole ribonucleotide (N5-CAIR) to 4-carboxy-5-aminoimidazole ribonucleotide (CAIR). This chain is N5-carboxyaminoimidazole ribonucleotide mutase, found in Synechocystis sp. (strain ATCC 27184 / PCC 6803 / Kazusa).